Consider the following 72-residue polypeptide: Movement protein TGBp3 (72 aa).

The Lumenal segment spans residues 1-2 (MS). The chain crosses the membrane as a helical span at residues 3–23 (LSFSLIVFAVGVAVSIGVLTL). The Cytoplasmic portion of the chain corresponds to 24 to 72 (TTQQSSSYCLILVDGAKAVVEGCHLRQDIPAILSELKPASSPFNPLFCS).

Belongs to the Tymovirales TGBp3 protein family.

The protein resides in the host endoplasmic reticulum membrane. Its function is as follows. Plays a role in viral cell-to-cell propagation, by facilitating genome transport to neighboring plant cells through plasmosdesmata. May induce the formation of granular vesicles derived from the Endoplasmic reticulum, which align on actin filaments. This is Movement protein TGBp3 (ORF4) from Lolium latent virus (isolate Lolium/USA/US1/-) (LoLV).